The sequence spans 546 residues: Putative serine hydroxymethyltransferase, mitochondrial (546 aa).

The N-terminal 64 residues, 1 to 64, are a transit peptide targeting the mitochondrion; that stretch reads MSSFQSTAAV…RFSSSSIAND (64 aa). N6-(pyridoxal phosphate)lysine is present on lysine 305.

This sequence belongs to the SHMT family. As to quaternary structure, homotetramer. Pyridoxal 5'-phosphate serves as cofactor.

It is found in the mitochondrion. The enzyme catalyses (6R)-5,10-methylene-5,6,7,8-tetrahydrofolate + glycine + H2O = (6S)-5,6,7,8-tetrahydrofolate + L-serine. It functions in the pathway one-carbon metabolism; tetrahydrofolate interconversion. Its function is as follows. Interconversion of serine and glycine. This chain is Putative serine hydroxymethyltransferase, mitochondrial (cbs-2), found in Neurospora crassa (strain ATCC 24698 / 74-OR23-1A / CBS 708.71 / DSM 1257 / FGSC 987).